The primary structure comprises 105 residues: Protein ORFg in retron Ec67 (105 aa).

In Escherichia coli, this protein is Protein ORFg in retron Ec67.